Reading from the N-terminus, the 963-residue chain is Importin-13 (963 aa).

HEAT repeat units lie at residues 24–54, 56–88, 95–135, 142–179, 194–231, 236–268, 276–325, 330–372, 375–438, 440–476, 487–522, 524–558, 562–600, 603–648, 676–716, 720–754, 761–803, 815–845, 860–893, and 897–931; these read ENVE…QAQV, PQAW…KISR, TDQY…LSMM, AVAD…EFQT, LAVE…SWVQ, LQDC…NAIS, VNTL…ALLD, WQSF…DDIL, EAEK…YEML, AELL…FQSI, VVPG…WLAD, PVMI…CREC, LPPY…LLSA, VEEI…SNLF, PVVV…VKTL, FAPM…VHIF, FPPI…ALKR, VKAV…TELL, EDGR…FALN, and FSLL…QQIL. The region spanning 45–111 is the Importin N-terminal domain; sequence AQKWLMQAQV…KAQLFTQITR (67 aa).

It belongs to the importin beta family. In terms of assembly, interacts with UBC9, RAN, RBM8A, eIF-1A and PAX6.

The protein localises to the cytoplasm. Its subcellular location is the nucleus. In terms of biological role, functions in nuclear protein import as nuclear transport receptor. Serves as receptor for nuclear localization signals (NLS) in cargo substrates. Is thought to mediate docking of the importin/substrate complex to the nuclear pore complex (NPC) through binding to nucleoporin and the complex is subsequently translocated through the pore by an energy requiring, Ran-dependent mechanism. At the nucleoplasmic side of the NPC, Ran binds to the importin, the importin/substrate complex dissociates and importin is re-exported from the nucleus to the cytoplasm where GTP hydrolysis releases Ran. The directionality of nuclear import is thought to be conferred by an asymmetric distribution of the GTP- and GDP-bound forms of Ran between the cytoplasm and nucleus. Mediates the nuclear import of UBC9, the RBM8A/MAGOH complex, PAX6 and probably other members of the paired homeobox family. Also mediates nuclear export of eIF-1A, and the cytoplasmic release of eIF-1A is triggered by the loading of import substrates onto IPO13. The sequence is that of Importin-13 (Ipo13) from Mus musculus (Mouse).